The chain runs to 168 residues: Protein-export protein SecB (168 aa).

Polar residues predominate over residues 1 to 10 (MSDQGTNNGE). Positions 1–22 (MSDQGTNNGESGNGGAQNGEAP) are disordered.

The protein belongs to the SecB family. In terms of assembly, homotetramer, a dimer of dimers. One homotetramer interacts with 1 SecA dimer.

The protein resides in the cytoplasm. Its function is as follows. One of the proteins required for the normal export of preproteins out of the cell cytoplasm. It is a molecular chaperone that binds to a subset of precursor proteins, maintaining them in a translocation-competent state. It also specifically binds to its receptor SecA. The protein is Protein-export protein SecB of Parvibaculum lavamentivorans (strain DS-1 / DSM 13023 / NCIMB 13966).